Consider the following 502-residue polypeptide: ATP synthase subunit alpha (502 aa).

169–176 serves as a coordination point for ATP; sequence GDRQTGKT.

The protein belongs to the ATPase alpha/beta chains family. F-type ATPases have 2 components, CF(1) - the catalytic core - and CF(0) - the membrane proton channel. CF(1) has five subunits: alpha(3), beta(3), gamma(1), delta(1), epsilon(1). CF(0) has three main subunits: a(1), b(2) and c(9-12). The alpha and beta chains form an alternating ring which encloses part of the gamma chain. CF(1) is attached to CF(0) by a central stalk formed by the gamma and epsilon chains, while a peripheral stalk is formed by the delta and b chains.

It is found in the cell membrane. It catalyses the reaction ATP + H2O + 4 H(+)(in) = ADP + phosphate + 5 H(+)(out). In terms of biological role, produces ATP from ADP in the presence of a proton gradient across the membrane. The alpha chain is a regulatory subunit. This Staphylococcus aureus (strain COL) protein is ATP synthase subunit alpha.